A 524-amino-acid chain; its full sequence is Glucose-6-phosphate 1-dehydrogenase (524 aa).

Ser-20 is modified (phosphoserine). Residues 42 to 49 (GASGDLAK), Arg-76, and Lys-175 each bind NADP(+). D-glucose 6-phosphate is bound by residues Lys-175, 205 to 209 (HYLGK), Glu-243, and Asp-262. The Proton acceptor role is filled by His-267. An NADP(+)-binding site is contributed by Arg-362. D-glucose 6-phosphate contacts are provided by Lys-365 and Arg-370. Residues Lys-371, Arg-375, and Arg-398 each contribute to the NADP(+) site. Residue Gln-400 participates in D-glucose 6-phosphate binding. Residues 406 to 408 (YFK), 426 to 428 (DLT), Arg-492, Tyr-508, and Trp-514 each bind NADP(+).

Belongs to the glucose-6-phosphate dehydrogenase family.

It is found in the cytoplasm. It localises to the cytosol. The catalysed reaction is D-glucose 6-phosphate + NADP(+) = 6-phospho-D-glucono-1,5-lactone + NADPH + H(+). It functions in the pathway carbohydrate degradation; pentose phosphate pathway; D-ribulose 5-phosphate from D-glucose 6-phosphate (oxidative stage): step 1/3. Cytosolic glucose-6-phosphate dehydrogenase that catalyzes the first and rate-limiting step of the oxidative branch within the pentose phosphate pathway/shunt, an alternative route to glycolysis for the dissimilation of carbohydrates and a major source of reducing power and metabolic intermediates for fatty acid and nucleic acid biosynthetic processes. In Drosophila melanogaster (Fruit fly), this protein is Glucose-6-phosphate 1-dehydrogenase.